Consider the following 34-residue polypeptide: U1-poneritoxin-Na2a (34 aa).

In terms of tissue distribution, expressed by the venom gland.

The protein localises to the secreted. May have antimicrobial properties, like most ant linear peptides. This chain is U1-poneritoxin-Na2a, found in Neoponera apicalis (Ant).